We begin with the raw amino-acid sequence, 793 residues long: Phenylalanine--tRNA ligase beta subunit (793 aa).

Residues 39 to 154 (TCSFSSIITA…ENTPLGESAC (116 aa)) form the tRNA-binding domain. Residues 403–481 (PQASTLSFRT…QPWKVENKKA (79 aa)) enclose the B5 domain. Positions 457, 463, 466, and 467 each coordinate Mg(2+). An FDX-ACB domain is found at 697-793 (PIYPSSFRDI…QINDTKGTID (97 aa)).

Belongs to the phenylalanyl-tRNA synthetase beta subunit family. Type 1 subfamily. In terms of assembly, tetramer of two alpha and two beta subunits. Requires Mg(2+) as cofactor.

It localises to the cytoplasm. The catalysed reaction is tRNA(Phe) + L-phenylalanine + ATP = L-phenylalanyl-tRNA(Phe) + AMP + diphosphate + H(+). This chain is Phenylalanine--tRNA ligase beta subunit, found in Chlamydia caviae (strain ATCC VR-813 / DSM 19441 / 03DC25 / GPIC) (Chlamydophila caviae).